Reading from the N-terminus, the 148-residue chain is Putative antiporter subunit mnhG2 (148 aa).

Transmembrane regions (helical) follow at residues 11-31 (IAAI…IGLI), 51-71 (VLLT…YLSV), and 72-92 (RLIL…HLIS). A disordered region spans residues 125–148 (EQLKQRAHEREERRRKTYEKEHDY). The span at 127-148 (LKQRAHEREERRRKTYEKEHDY) shows a compositional bias: basic and acidic residues.

The protein belongs to the CPA3 antiporters (TC 2.A.63) subunit G family. In terms of assembly, may form a heterooligomeric complex that consists of seven subunits: mnhA2, mnhB2, mnhC2, mnhD2, mnhE2, mnhF2 and mnhG2.

It localises to the cell membrane. This chain is Putative antiporter subunit mnhG2 (mnhG2), found in Staphylococcus saprophyticus subsp. saprophyticus (strain ATCC 15305 / DSM 20229 / NCIMB 8711 / NCTC 7292 / S-41).